We begin with the raw amino-acid sequence, 152 residues long: Protein SprT-like (152 aa).

Residues 9-149 (LQKLTETISL…CGKCNGKLKE (141 aa)) enclose the SprT-like domain. Histidine 70 serves as a coordination point for Zn(2+). Residue glutamate 71 is part of the active site. Residue histidine 74 coordinates Zn(2+).

Belongs to the SprT family. It depends on Zn(2+) as a cofactor.

The protein resides in the cytoplasm. The sequence is that of Protein SprT-like from Staphylococcus saprophyticus subsp. saprophyticus (strain ATCC 15305 / DSM 20229 / NCIMB 8711 / NCTC 7292 / S-41).